A 234-amino-acid chain; its full sequence is MEVYEGKAKKMIPMDDDKFIMEFKDDATAFDGVKKAKFKGKGWLNAQISAKFFKLLEEHGIKTHFIGVAGDNKLIVEKLDMYPLEVVVRNVVAGSLKKRLPLPEGYELPEPIVELYYKSDELHDPMINYYHAKILGITLEEIKKMEEIALKVNEILKDYLAKRGIILVDFKLEFGKNKNGEIILADEISPDTCRFWDAETKKSLDKDVFRFDKGDLIEAYEELYRRITGEDPGN.

Belongs to the SAICAR synthetase family.

The catalysed reaction is 5-amino-1-(5-phospho-D-ribosyl)imidazole-4-carboxylate + L-aspartate + ATP = (2S)-2-[5-amino-1-(5-phospho-beta-D-ribosyl)imidazole-4-carboxamido]succinate + ADP + phosphate + 2 H(+). Its pathway is purine metabolism; IMP biosynthesis via de novo pathway; 5-amino-1-(5-phospho-D-ribosyl)imidazole-4-carboxamide from 5-amino-1-(5-phospho-D-ribosyl)imidazole-4-carboxylate: step 1/2. The polypeptide is Phosphoribosylaminoimidazole-succinocarboxamide synthase (purC) (Pyrococcus abyssi (strain GE5 / Orsay)).